Reading from the N-terminus, the 277-residue chain is Ribosomal RNA small subunit methyltransferase A (277 aa).

6 residues coordinate S-adenosyl-L-methionine: H20, L22, G47, E71, D94, and N116.

The protein belongs to the class I-like SAM-binding methyltransferase superfamily. rRNA adenine N(6)-methyltransferase family. RsmA subfamily.

Its subcellular location is the cytoplasm. The catalysed reaction is adenosine(1518)/adenosine(1519) in 16S rRNA + 4 S-adenosyl-L-methionine = N(6)-dimethyladenosine(1518)/N(6)-dimethyladenosine(1519) in 16S rRNA + 4 S-adenosyl-L-homocysteine + 4 H(+). In terms of biological role, specifically dimethylates two adjacent adenosines (A1518 and A1519) in the loop of a conserved hairpin near the 3'-end of 16S rRNA in the 30S particle. May play a critical role in biogenesis of 30S subunits. In Burkholderia sp, this protein is Ribosomal RNA small subunit methyltransferase A.